The chain runs to 1341 residues: WD repeat-containing protein 19 (1341 aa).

WD repeat units follow at residues 11–51 (SWLG…RSEI), 52–92 (SLPG…TSQL), 95–134 (GMRDQMSFLLWSKIGSFLAVGTIKGNLLIYNHQTSRKIPV), 137–175 (KHTKKITCGCWNSENLLALGGEDKMITVSNQEGDTIRQT), 273–311 (DHKDNLTSVALSQTLNKAATCGDNCIKIHDLTELRDMYA), and 317–356 (DENKGLGTLSWTDDGQLLALSTQRGSLHVFLTKLPILGDA). TPR repeat units follow at residues 736 to 769 (AQDLYLASNCPVAALEMRRDLQHWDSALQLAKRL), 775 to 808 (PFISKEYAIQLEFTGDYVNALAHYEKGITGDNKE), 840 to 873 (RVLKRDCGAILENMKQFSEAAQLYEKGQYYDRAA), 895 to 928 (PKIHLQYAKAKEADGRYKEAVVAYENAKQWNSVI), 951 to 984 (LDGAKMVARFFLQLGDYGSAIQFLVLSKCNNEAF), and 1020 to 1053 (EKRHFQAGKFFLLCGQYSRALKHFLKCPSSEDNV).

As to quaternary structure, component of the IFT complex A (IFT-A) complex. IFT-A complex is divided into a core subcomplex composed of IFT122:IFT140:WDR19 which is associated with TULP3 and a peripheral subcomplex composed of IFT43:WDR35:TTC21B. Interacts (via C-terminal region) with IFT122 (via C-terminal region). Interacts with BBS1. Interacts with TTC25. As to expression, tissue-specific expression of isoforms. Expressed in the prostate, testis, epididymis, submaxillary and salivary glands. Expressed in ependymal cells lining brain ventricles (at protein level).

It is found in the cell projection. It localises to the cilium. The protein resides in the cytoplasm. The protein localises to the cytoskeleton. Its subcellular location is the cilium basal body. It is found in the photoreceptor outer segment. It localises to the flagellum. In terms of biological role, as component of the IFT complex A (IFT-A), a complex required for retrograde ciliary transport and entry into cilia of G protein-coupled receptors (GPCRs), it is involved in cilia function and/or assembly. Essential for functional IFT-A assembly and ciliary entry of GPCRs. Associates with the BBSome complex to mediate ciliary transport. In Mus musculus (Mouse), this protein is WD repeat-containing protein 19.